The primary structure comprises 172 residues: C-phycocyanin-2 beta subunit (172 aa).

An N4-methylasparagine modification is found at N72. (2R,3E)-phycocyanobilin is bound by residues C82 and C153.

The protein belongs to the phycobiliprotein family. As to quaternary structure, heterodimer of an alpha and a beta subunit, which further assembles into trimers and the trimers into hexamers. Post-translationally, contains two covalently linked bilin chromophores.

It is found in the cellular thylakoid membrane. Its function is as follows. Light-harvesting photosynthetic bile pigment-protein from the phycobiliprotein complex (phycobilisome, PBS). Phycocyanin is the major phycobiliprotein in the PBS rod. The chain is C-phycocyanin-2 beta subunit (cpcB2) from Pseudanabaena tenuis (strain PCC 7409).